The chain runs to 379 residues: Inactive 2'-5'-oligoadenylate synthase 1B (379 aa).

Over 1–355 (MEQELRSIPA…VPTEVDIPSQ (355 aa)) the chain is Cytoplasmic. Residues 356–374 (NYFFHIICLIFWLLLRLIF) form a helical; Anchor for type IV membrane protein membrane-spanning segment. Topologically, residues 375 to 379 (GKHSV) are extracellular.

Belongs to the 2-5A synthase family. Interacts with OSBPL1A and ABCF3. Highly expressed in the brain, liver, spleen and heart.

Its subcellular location is the endoplasmic reticulum membrane. In terms of biological role, does not have 2'-5'-OAS activity, but can bind double-stranded RNA. Displays antiviral activity against viruses via an alternative antiviral pathway independent of RNase L. The sequence is that of Inactive 2'-5'-oligoadenylate synthase 1B (Oas1b) from Rattus norvegicus (Rat).